Consider the following 179-residue polypeptide: Ubiquitin-conjugating enzyme E2 C (179 aa).

Positions 1 to 14 (MASQNRDPAATSVT) are enriched in polar residues. The tract at residues 1 to 31 (MASQNRDPAATSVTAARKGAEPSGGAARGPV) is disordered. A2 bears the N-acetylalanine mark. S3 bears the Phosphoserine mark. The UBC core domain maps to 30 to 175 (PVGKRLQQEL…LQETYSKQVT (146 aa)). The Glycyl thioester intermediate role is filled by C114.

The protein belongs to the ubiquitin-conjugating enzyme family. Component of the APC/C complex, composed of at least 14 distinct subunits that assemble into a complex of at least 19 chains with a combined molecular mass of around 1.2 MDa. Within this complex, directly interacts with ANAPC2. In terms of processing, autoubiquitinated by the APC/C complex, leading to its degradation by the proteasome. Its degradation plays a central role in APC/C regulation, allowing cyclin-A accumulation before S phase entry. APC/C substrates inhibit the autoubiquitination of UBE2C/UBCH10 but not its E2 function, hence APC/C remaining active until its substrates have been destroyed.

The enzyme catalyses S-ubiquitinyl-[E1 ubiquitin-activating enzyme]-L-cysteine + [E2 ubiquitin-conjugating enzyme]-L-cysteine = [E1 ubiquitin-activating enzyme]-L-cysteine + S-ubiquitinyl-[E2 ubiquitin-conjugating enzyme]-L-cysteine.. It catalyses the reaction S-ubiquitinyl-[E1 ubiquitin-activating enzyme]-L-cysteine + [acceptor protein]-L-lysine = [E1 ubiquitin-activating enzyme]-L-cysteine + N(6)-monoubiquitinyl-[acceptor protein]-L-lysine.. It participates in protein modification; protein ubiquitination. Its function is as follows. Accepts ubiquitin from the E1 complex and catalyzes its covalent attachment to other proteins. In vitro catalyzes 'Lys-11'- and 'Lys-48'-linked polyubiquitination. Acts as an essential factor of the anaphase promoting complex/cyclosome (APC/C), a cell cycle-regulated ubiquitin ligase that controls progression through mitosis. Acts by initiating 'Lys-11'-linked polyubiquitin chains on APC/C substrates, leading to the degradation of APC/C substrates by the proteasome and promoting mitotic exit. The protein is Ubiquitin-conjugating enzyme E2 C (UBE2C) of Macaca fascicularis (Crab-eating macaque).